The sequence spans 149 residues: Dehydrin Rab15 (149 aa).

The interval 1–149 (MEFQGQHDNP…KIKEKLPGQH (149 aa)) is disordered. A compositionally biased stretch (basic and acidic residues) spans 78–93 (KEKIKEKLPGGHKDNQ). Positions 100–117 (TGTGGAYGPGTGTGGAYG) are enriched in gly residues. The span at 132-149 (GEKKGIMDKIKEKLPGQH) shows a compositional bias: basic and acidic residues.

The protein belongs to the plant dehydrin family.

The protein is Dehydrin Rab15 (RAB15) of Triticum aestivum (Wheat).